Reading from the N-terminus, the 491-residue chain is Glutamyl-tRNA(Gln) amidotransferase subunit A (491 aa).

Residues Lys77 and Ser152 each act as charge relay system in the active site. The active-site Acyl-ester intermediate is the Ser176.

The protein belongs to the amidase family. GatA subfamily. As to quaternary structure, heterotrimer of A, B and C subunits.

It carries out the reaction L-glutamyl-tRNA(Gln) + L-glutamine + ATP + H2O = L-glutaminyl-tRNA(Gln) + L-glutamate + ADP + phosphate + H(+). Allows the formation of correctly charged Gln-tRNA(Gln) through the transamidation of misacylated Glu-tRNA(Gln) in organisms which lack glutaminyl-tRNA synthetase. The reaction takes place in the presence of glutamine and ATP through an activated gamma-phospho-Glu-tRNA(Gln). The protein is Glutamyl-tRNA(Gln) amidotransferase subunit A (gatA) of Chlamydia muridarum (strain MoPn / Nigg).